The chain runs to 172 residues: Adenine phosphoribosyltransferase (172 aa).

This sequence belongs to the purine/pyrimidine phosphoribosyltransferase family. As to quaternary structure, homodimer.

It is found in the cytoplasm. The enzyme catalyses AMP + diphosphate = 5-phospho-alpha-D-ribose 1-diphosphate + adenine. The protein operates within purine metabolism; AMP biosynthesis via salvage pathway; AMP from adenine: step 1/1. Functionally, catalyzes a salvage reaction resulting in the formation of AMP, that is energically less costly than de novo synthesis. This is Adenine phosphoribosyltransferase from Ligilactobacillus salivarius (strain UCC118) (Lactobacillus salivarius).